We begin with the raw amino-acid sequence, 2339 residues long: Voltage-dependent N-type calcium channel subunit alpha-1B (2339 aa).

The Cytoplasmic portion of the chain corresponds to 1 to 90 (MVRFGDELGG…DNVVRKYAKR (90 aa)). The segment covering 15-34 (AGGAERARGGGAGGAGGPGP) has biased composition (gly residues). A disordered region spans residues 15-37 (AGGAERARGGGAGGAGGPGPGGL). Residue arginine 22 is modified to Omega-N-methylarginine. One copy of the I repeat lies at 82-359 (NVVRKYAKRI…LVLGVLSGEF (278 aa)). The helical transmembrane segment at 91–114 (ITEWPPFEYMILATIIANCIVLAL) threads the bilayer. At 115–131 (EQHLPDGDKTPMSERLD) the chain is on the extracellular side. The helical transmembrane segment at 132-152 (DTEPYFIGIFCFEAGIKILAL) threads the bilayer. Over 153–163 (GFVLHKGSYLR) the chain is Cytoplasmic. Residues 164–182 (NGWNVMDFVVVLTGILATA) traverse the membrane as a helical segment. The Extracellular segment spans residues 183–187 (GTDFD). A helical membrane pass occupies residues 188–211 (LRTLRAVRVLRPLKLVSGIPSLQV). The Cytoplasmic segment spans residues 212-221 (VLKSIMKAMV). A helical membrane pass occupies residues 222–244 (PLLQIGLLLFFAILMFAIIGLEF). Over 245–331 (YMGKFHKACF…NTNDAAGNTW (87 aa)) the chain is Extracellular. Asparagine 256 carries N-linked (GlcNAc...) asparagine glycosylation. A helical transmembrane segment spans residues 332 to 356 (NWLYFIPLIIIGSFFMLNLVLGVLS). The Cytoplasmic segment spans residues 357 to 483 (GEFAKERERV…FFIRRMVKAQ (127 aa)). Residues 379 to 396 (QQIERELNGYLEWIFKAE) form a binding to the beta subunit region. Serine 411 is modified (phosphoserine). 452-459 (ASLKSGKT) is an ATP binding site. One copy of the II repeat lies at 469–713 (EKMFRFFIRR…VFLAIAVDNL (245 aa)). The helical transmembrane segment at 484–502 (SFYWTVLCVVALNTLCVAM) threads the bilayer. Topologically, residues 503–512 (VHYNQPQRLT) are extracellular. Residues 513 to 535 (TALYFAEFVFLGLFLTEMSLKMY) traverse the membrane as a helical segment. The Cytoplasmic segment spans residues 536 to 545 (GLGPRSYFRS). Serine 545 contacts a 1,2-diacyl-sn-glycero-3-phospho-(1D-myo-inositol-4,5-bisphosphate). Residues 546–567 (SFNCFDFGVIVGSIFEVVWAAV) traverse the membrane as a helical segment. Residues 568–574 (KPGTSFG) are Extracellular-facing. A helical membrane pass occupies residues 575–587 (ISVLRALRLLRIF). A 1,2-diacyl-sn-glycero-3-phospho-(1D-myo-inositol-4,5-bisphosphate) contacts are provided by arginine 585 and lysine 588. At 588 to 605 (KVTKYWNSLRNLVVSLLN) the chain is on the cytoplasmic side. The chain crosses the membrane as a helical span at residues 606–631 (SMKSIISLLFLLFLFIVVFALLGMQL). Topologically, residues 632 to 683 (FGGQFNFKDETPTTNFDTFPAAILTVFQILTGEDWNAVMYHGIESQGGVSRG) are extracellular. Residues 684–710 (MFSSFYFIVLTLFGNYTLLNVFLAIAV) form a helical membrane-spanning segment. Residues 711-1156 (DNLANAQELT…CCHYIVTMRY (446 aa)) lie on the Cytoplasmic side of the membrane. Phosphoserine is present on residues serine 746, serine 749, and serine 784. 5 stretches are compositionally biased toward basic and acidic residues: residues 809-827 (DVKT…RDAP), 870-891 (EQDR…EERG), 927-937 (GSPEEAAEREP), 973-984 (CPREAESSEEPA), and 999-1026 (TAEK…RNHQ). Disordered stretches follow at residues 809–1026 (DVKT…RNHQ) and 1056–1084 (VEEQ…TTVH). Over residues 1066-1083 (QRNVTRMGSQPPDTSTTV) the composition is skewed to polar residues. Position 1074 is a phosphoserine (serine 1074). An III repeat occupies 1142 to 1424 (NLLRRCCHYI…IFVALIIITF (283 aa)). Residues 1157–1175 (FEMVILVVIALSSIALAAE) form a helical membrane-spanning segment. Residues 1176-1183 (DPVRTDSP) are Extracellular-facing. Residues 1184 to 1208 (RNNALKYMDYIFTGVFTFEMVIKMI) traverse the membrane as a helical segment. Topologically, residues 1209-1222 (DLGLLLHPGAYFRD) are cytoplasmic. A helical membrane pass occupies residues 1223–1243 (LWNILDFIVVSGALVAFAFSG). At 1244-1249 (SKGKDI) the chain is on the extracellular side. The chain crosses the membrane as a helical span at residues 1250 to 1270 (STIKSLRVLRVLRPLKTIKRL). Topologically, residues 1271 to 1288 (PKLKAVFDCVVNSLKNVL) are cytoplasmic. The chain crosses the membrane as a helical span at residues 1289–1308 (NILIVYMLFMFIFAVIAVQL). Topologically, residues 1309-1395 (FKGKFFYCTD…EQGPSPGYRM (87 aa)) are extracellular. A helical membrane pass occupies residues 1396-1421 (ELSIFYVVYFVVFPFFFVNIFVALII). The Cytoplasmic segment spans residues 1422–1476 (ITFQEQGDKVMSECSLEKNERACIDFAISARPLTRYMPQNKQSFQYKTWTFVVSP). An IV repeat occupies 1461–1714 (NKQSFQYKTW…LFVAVIMDNF (254 aa)). The chain crosses the membrane as a helical span at residues 1477–1495 (PFEYFIMAMIALNTVVLMM). Over 1496–1503 (KFYDAPYE) the chain is Extracellular. Residues 1504-1528 (YELMLKCLNIVFTSMFSMECVLKII) form a helical membrane-spanning segment. The Cytoplasmic segment spans residues 1529-1538 (AFGVLNYFRD). A helical membrane pass occupies residues 1539–1560 (AWNVFDFVTVLGSITDILVTEI). Topologically, residues 1561-1566 (ANNFIN) are extracellular. N-linked (GlcNAc...) asparagine glycosylation occurs at asparagine 1566. Residues 1567–1585 (LSFLRLFRAARLIKLLRQG) traverse the membrane as a helical segment. Topologically, residues 1586–1604 (YTIRILLWTFVQSFKALPY) are cytoplasmic. The chain crosses the membrane as a helical span at residues 1605 to 1624 (VCLLIAMLFFIYAIIGMQVF). The Extracellular segment spans residues 1625–1686 (GNIALDDDTS…SNASECGSDF (62 aa)). N-linked (GlcNAc...) asparagine glycosylation occurs at asparagine 1678. The helical transmembrane segment at 1687–1710 (AYFYFVSFIFLCSFLMLNLFVAVI) threads the bilayer. Topologically, residues 1711-2339 (MDNFEYLTRD…CHHPDRDRRC (629 aa)) are cytoplasmic. The EF-hand domain occupies 1727 to 1762 (HHLDEFIRVWAEYDPAACGRISYSDMFEMLKHMSPP). Residues aspartate 1740, arginine 1746, and aspartate 1751 each coordinate Ca(2+). A disordered region spans residues 1983 to 2312 (TLSGPDAEPQ…QPPPLRRVPN (330 aa)). The span at 2050–2064 (PHHHHHRCHRRRDRK) shows a compositional bias: basic residues. Serine 2067 bears the Phosphoserine mark. Over residues 2099–2136 (CRRERERRQERGRSQERRQPSSSSSEKHRFYSCDRFGG) the composition is skewed to basic and acidic residues. Polar residues-rich tracts occupy residues 2144 to 2155 (PSLSSHPTSPTA) and 2165 to 2181 (GSGS…SGAS). Residues serine 2224, serine 2233, and serine 2256 each carry the phosphoserine modification. The segment covering 2286–2302 (SNSGRSSRTSYVSSLTS) has biased composition (low complexity).

The protein belongs to the calcium channel alpha-1 subunit (TC 1.A.1.11) family. CACNA1B subfamily. As to quaternary structure, multisubunit complex consisting of alpha-1, alpha-2, beta and delta subunits in a 1:1:1:1 ratio. The channel activity is directed by the pore-forming and voltage-sensitive alpha-1 subunit. In many cases, this subunit is sufficient to generate voltage-sensitive calcium channel activity. The auxiliary subunits beta and alpha-2/delta linked by a disulfide bridge regulate the channel activity. Interacts with RIMS1. Interacts with FMR1 (via C-terminus); this interaction induces a decrease in the number of presynaptic functional CACNA1B channels at the cell surface. In terms of processing, phosphorylated in vitro by CaM-kinase II, PKA, PKC and CGPK. Widespread expression throughout the brain. Highest levels in corpus striatum and midbrain.

The protein localises to the membrane. The catalysed reaction is Ca(2+)(in) = Ca(2+)(out). With respect to regulation, is specifically blocked by omega-conotoxin GVIA. Is specifically blocked by omega-conotoxin MVIIA (ziconotide). Is insensitive to dihydropyridines (DHP). Functionally, voltage-sensitive calcium channels (VSCC) mediate the entry of calcium ions into excitable cells and are also involved in a variety of calcium-dependent processes, including muscle contraction, hormone or neurotransmitter release, gene expression, cell motility, cell division and cell death. This alpha-1B subunit gives rise to N-type calcium currents. N-type calcium channels belong to the 'high-voltage activated' (HVA) group. They are involved in pain signaling. Calcium channels containing alpha-1B subunit may play a role in directed migration of immature neurons. Mediates Ca(2+) release probability at hippocampal neuronal soma and synaptic terminals. The protein is Voltage-dependent N-type calcium channel subunit alpha-1B (CACNA1B) of Oryctolagus cuniculus (Rabbit).